The chain runs to 297 residues: Small ribosomal subunit protein uS2 (297 aa).

The interval 266–297 (GASWDAAEPSDWAATPAAAGQEWAASGATEQW) is disordered. Residues 282-297 (AAAGQEWAASGATEQW) show a composition bias toward low complexity.

This sequence belongs to the universal ribosomal protein uS2 family. In terms of assembly, component of the small ribosomal subunit. Mature ribosomes consist of a small (40S) and a large (60S) subunit. The 40S subunit contains about 33 different proteins and 1 molecule of RNA (18S). The 60S subunit contains about 49 different proteins and 3 molecules of RNA (25S, 5.8S and 5S). Interacts with rps21.

It localises to the cytoplasm. Its function is as follows. Required for the assembly and/or stability of the 40S ribosomal subunit. Required for the processing of the 20S rRNA-precursor to mature 18S rRNA in a late step of the maturation of 40S ribosomal subunits. In Sclerotinia sclerotiorum (strain ATCC 18683 / 1980 / Ss-1) (White mold), this protein is Small ribosomal subunit protein uS2 (rps0).